Reading from the N-terminus, the 302-residue chain is CRISPR-associated endonuclease Cas1 1 (302 aa).

Positions 159, 219, and 234 each coordinate Mn(2+).

Belongs to the CRISPR-associated endonuclease Cas1 family. In terms of assembly, homodimer, forms a heterotetramer with a Cas2 homodimer. Mg(2+) serves as cofactor. Mn(2+) is required as a cofactor.

Functionally, CRISPR (clustered regularly interspaced short palindromic repeat), is an adaptive immune system that provides protection against mobile genetic elements (viruses, transposable elements and conjugative plasmids). CRISPR clusters contain spacers, sequences complementary to antecedent mobile elements, and target invading nucleic acids. CRISPR clusters are transcribed and processed into CRISPR RNA (crRNA). Acts as a dsDNA endonuclease. Involved in the integration of spacer DNA into the CRISPR cassette. The polypeptide is CRISPR-associated endonuclease Cas1 1 (Pyrobaculum aerophilum (strain ATCC 51768 / DSM 7523 / JCM 9630 / CIP 104966 / NBRC 100827 / IM2)).